The sequence spans 300 residues: Histone deacetylase HDT3 (300 aa).

A compositionally biased stretch (acidic residues) spans 98–112 (EDEMDLDSEDEDEEL). The interval 98 to 300 (EDEMDLDSED…AHSKAKHGGK (203 aa)) is disordered. The segment covering 119–132 (ENGKADEKKQKSQE) has biased composition (basic and acidic residues). The segment covering 151–197 (DDDSDEDETDDSDEDETDDSDEGLSPEEGDDDSSDEDDTSDDEEEDT) has biased composition (acidic residues). The span at 198–211 (PTPKKPEVGKKRAA) shows a compositional bias: basic and acidic residues. Residues 265 to 275 (SPKSAPKSGVP) show a composition bias toward low complexity. The C2H2-type zinc finger occupies 274–297 (VPCKSCSKSFISETAPQAHSKAKH). The span at 279 to 290 (CSKSFISETAPQ) shows a compositional bias: polar residues.

Belongs to the histone deacetylase HD2 family. As to quaternary structure, multimer. Possibly forms a homotrimer with HDT1 and/or HDT2.

Its subcellular location is the nucleus. The protein localises to the nucleolus. Functionally, mediates the deacetylation of lysine residues on the N-terminal part of the core histones (H2A, H2B, H3 and H4). Histone deacetylation gives a tag for epigenetic repression and plays an important role in transcriptional regulation, cell cycle progression and developmental events. This Zea mays (Maize) protein is Histone deacetylase HDT3 (HDT3).